The sequence spans 172 residues: uncharacterized protein (172 aa).

3 helical membrane-spanning segments follow: residues 44-68 (VLVS…AALT), 86-110 (LASY…VFSL), and 117-135 (VVFI…VTLF).

Belongs to the chlamydial CPn_0442/CT_006/TC_0274 family.

It localises to the cell membrane. This is an uncharacterized protein from Chlamydia pneumoniae (Chlamydophila pneumoniae).